The sequence spans 946 residues: RIPOR family member 3 (946 aa).

3 positions are modified to phosphoserine: Ser9, Ser24, and Ser340. Thr345 is modified (phosphothreonine). 2 positions are modified to phosphoserine: Ser351 and Ser384. A disordered region spans residues 390–512 (GPSLRSQSQE…GDREDGPGVA (123 aa)). Residues 437–446 (SIEEEAREDP) are compositionally biased toward basic and acidic residues. Polar residues predominate over residues 478-495 (SLPQGSLFHSGTASSSQN). Positions 496–508 (GHEEGATGDREDG) are enriched in basic and acidic residues.

This sequence belongs to the RIPOR family.

The protein is RIPOR family member 3 of Homo sapiens (Human).